We begin with the raw amino-acid sequence, 162 residues long: CASP-like protein BLE3 (162 aa).

The Cytoplasmic segment spans residues 1–7 (MAKVHRL). A helical membrane pass occupies residues 8-28 (MNAVLRLAAAAAAATAAVVMV). Residues 29 to 50 (TSRETTSFFGIQMEAKYSYTPS) are Extracellular-facing. The chain crosses the membrane as a helical span at residues 51–71 (FIFFVVAYAVAAAYSLLVLAV). At 72–85 (PAGSALSRLALTTD) the chain is on the cytoplasmic side. The chain crosses the membrane as a helical span at residues 86–106 (VVLGMVLAGAVASAGAISDIA). At 107–128 (KNGNSHAGWLPVCGQIHAYCNH) the chain is on the extracellular side. Residues 129–149 (VMAALIAGFVALAVHFVVVMY) form a helical membrane-spanning segment. At 150–162 (SLHIVTDVICPCH) the chain is on the cytoplasmic side.

Belongs to the Casparian strip membrane proteins (CASP) family. In terms of assembly, homodimer and heterodimers.

It is found in the cell membrane. In terms of biological role, involved in cell elongation in rice through dual regulation by brassinolide and auxin. The polypeptide is CASP-like protein BLE3 (BLE3) (Oryza sativa subsp. indica (Rice)).